Reading from the N-terminus, the 384-residue chain is 8-amino-7-oxononanoate synthase (384 aa).

Substrate is bound at residue arginine 21. Position 108 to 109 (108 to 109) interacts with pyridoxal 5'-phosphate; the sequence is GF. Histidine 133 contacts substrate. Positions 179, 207, and 233 each coordinate pyridoxal 5'-phosphate. N6-(pyridoxal phosphate)lysine is present on lysine 236. Threonine 352 contacts substrate.

Belongs to the class-II pyridoxal-phosphate-dependent aminotransferase family. BioF subfamily. Homodimer. The cofactor is pyridoxal 5'-phosphate.

The catalysed reaction is 6-carboxyhexanoyl-[ACP] + L-alanine + H(+) = (8S)-8-amino-7-oxononanoate + holo-[ACP] + CO2. The protein operates within cofactor biosynthesis; biotin biosynthesis. Functionally, catalyzes the decarboxylative condensation of pimeloyl-[acyl-carrier protein] and L-alanine to produce 8-amino-7-oxononanoate (AON), [acyl-carrier protein], and carbon dioxide. The chain is 8-amino-7-oxononanoate synthase from Citrobacter koseri (strain ATCC BAA-895 / CDC 4225-83 / SGSC4696).